Consider the following 253-residue polypeptide: Ribosome maturation factor RimP (253 aa).

The segment covering 186-199 has biased composition (basic and acidic residues); that stretch reads RRGKAAEREKKRDL. The interval 186–253 is disordered; the sequence is RRGKAAEREK…RARRGEIDPD (68 aa). A compositionally biased stretch (low complexity) spans 201–216; that stretch reads LAPPLAPHAKPAAQAK. A compositionally biased stretch (basic and acidic residues) spans 240–253; sequence LAADRARRGEIDPD.

Belongs to the RimP family.

The protein localises to the cytoplasm. Its function is as follows. Required for maturation of 30S ribosomal subunits. This is Ribosome maturation factor RimP from Bradyrhizobium sp. (strain BTAi1 / ATCC BAA-1182).